Consider the following 158-residue polypeptide: 2-C-methyl-D-erythritol 2,4-cyclodiphosphate synthase (158 aa).

Residues D9 and H11 each contribute to the a divalent metal cation site. 4-CDP-2-C-methyl-D-erythritol 2-phosphate is bound by residues 9–11 and 35–36; these read DVH and HS. H43 contributes to the a divalent metal cation binding site. 4-CDP-2-C-methyl-D-erythritol 2-phosphate-binding positions include 57-59, 62-66, 101-107, 133-136, F140, and R143; these read DIG, FPDTD, AQAPKMA, and TTTE.

This sequence belongs to the IspF family. Homotrimer. A divalent metal cation serves as cofactor.

It catalyses the reaction 4-CDP-2-C-methyl-D-erythritol 2-phosphate = 2-C-methyl-D-erythritol 2,4-cyclic diphosphate + CMP. It functions in the pathway isoprenoid biosynthesis; isopentenyl diphosphate biosynthesis via DXP pathway; isopentenyl diphosphate from 1-deoxy-D-xylulose 5-phosphate: step 4/6. Its function is as follows. Involved in the biosynthesis of isopentenyl diphosphate (IPP) and dimethylallyl diphosphate (DMAPP), two major building blocks of isoprenoid compounds. Catalyzes the conversion of 4-diphosphocytidyl-2-C-methyl-D-erythritol 2-phosphate (CDP-ME2P) to 2-C-methyl-D-erythritol 2,4-cyclodiphosphate (ME-CPP) with a corresponding release of cytidine 5-monophosphate (CMP). The protein is 2-C-methyl-D-erythritol 2,4-cyclodiphosphate synthase of Vibrio vulnificus (strain CMCP6).